Here is a 576-residue protein sequence, read N- to C-terminus: Putative export ATP-binding/permease protein RC1073 (576 aa).

Residues 20 to 303 enclose the ABC transmembrane type-1 domain; sequence LIIVMISLLS…IFELLSEMHL (284 aa). Transmembrane regions (helical) follow at residues 21 to 41, 57 to 77, 135 to 155, 158 to 178, 242 to 262, and 277 to 297; these read IIVM…GSVF, VDNS…ASFF, FLSF…LMFF, FKLA…LIKF, ALFF…VVWI, and IISF…IFEL. In terms of domain architecture, ABC transporter spans 336-572; sequence IEFKNVDFTY…SEIYRNICRE (237 aa). Position 371-378 (371-378) interacts with ATP; it reads GRSGAGKS.

This sequence belongs to the ABC transporter superfamily. Homodimer.

The protein localises to the cell inner membrane. Part of an ABC transporter complex. Transmembrane domains (TMD) form a pore in the inner membrane and the ATP-binding domain (NBD) is responsible for energy generation. This chain is Putative export ATP-binding/permease protein RC1073, found in Rickettsia conorii (strain ATCC VR-613 / Malish 7).